We begin with the raw amino-acid sequence, 282 residues long: Bis(5'-nucleosyl)-tetraphosphatase, symmetrical (282 aa).

Belongs to the Ap4A hydrolase family.

The enzyme catalyses P(1),P(4)-bis(5'-adenosyl) tetraphosphate + H2O = 2 ADP + 2 H(+). In terms of biological role, hydrolyzes diadenosine 5',5'''-P1,P4-tetraphosphate to yield ADP. In Klebsiella pneumoniae subsp. pneumoniae (strain ATCC 700721 / MGH 78578), this protein is Bis(5'-nucleosyl)-tetraphosphatase, symmetrical.